A 430-amino-acid chain; its full sequence is Tyrosine--tRNA ligase (430 aa).

Y32 contacts L-tyrosine. A 'HIGH' region motif is present at residues 37-46 (PTADSLHIGH). Residues Y172 and Q176 each contribute to the L-tyrosine site. Residues 232–236 (KFGKT) carry the 'KMSKS' region motif. K235 provides a ligand contact to ATP. Residues 362–430 (ISLVDLLADA…KKSYYLIIVE (69 aa)) form the S4 RNA-binding domain.

The protein belongs to the class-I aminoacyl-tRNA synthetase family. TyrS type 1 subfamily. As to quaternary structure, homodimer.

The protein localises to the cytoplasm. It catalyses the reaction tRNA(Tyr) + L-tyrosine + ATP = L-tyrosyl-tRNA(Tyr) + AMP + diphosphate + H(+). Its function is as follows. Catalyzes the attachment of tyrosine to tRNA(Tyr) in a two-step reaction: tyrosine is first activated by ATP to form Tyr-AMP and then transferred to the acceptor end of tRNA(Tyr). The protein is Tyrosine--tRNA ligase of Porphyromonas gingivalis (strain ATCC BAA-308 / W83).